The chain runs to 531 residues: ATP synthase subunit beta (531 aa).

The disordered stretch occupies residues 1–48; sequence MVKAVTSSKETAKVEKKKSAPRSGVKKAVSKSQAGVKDSSSPVHKSSK. A compositionally biased stretch (basic residues) spans 19–29; that stretch reads SAPRSGVKKAV. The segment covering 30–44 has biased composition (polar residues); the sequence is SKSQAGVKDSSSPVH. 203-210 is a binding site for ATP; it reads GGAGVGKT.

It belongs to the ATPase alpha/beta chains family. F-type ATPases have 2 components, CF(1) - the catalytic core - and CF(0) - the membrane proton channel. CF(1) has five subunits: alpha(3), beta(3), gamma(1), delta(1), epsilon(1). CF(0) has three main subunits: a(1), b(2) and c(9-12). The alpha and beta chains form an alternating ring which encloses part of the gamma chain. CF(1) is attached to CF(0) by a central stalk formed by the gamma and epsilon chains, while a peripheral stalk is formed by the delta and b chains.

It is found in the cell inner membrane. The enzyme catalyses ATP + H2O + 4 H(+)(in) = ADP + phosphate + 5 H(+)(out). Functionally, produces ATP from ADP in the presence of a proton gradient across the membrane. The catalytic sites are hosted primarily by the beta subunits. This chain is ATP synthase subunit beta, found in Bartonella henselae (strain ATCC 49882 / DSM 28221 / CCUG 30454 / Houston 1) (Rochalimaea henselae).